The sequence spans 413 residues: Sulfoquinovose isomerase (413 aa).

The 6-sulfo-beta-D-quinovose site is built by arginine 55, tyrosine 111, asparagine 172, histidine 176, and arginine 238. Histidine 248 serves as the catalytic Proton donor/acceptor. Residues glutamate 251, glutamine 362, glutamine 379, and histidine 383 each coordinate 6-sulfo-beta-D-quinovose. The active-site Proton donor/acceptor is the histidine 383.

Belongs to the N-acylglucosamine 2-epimerase family. As to quaternary structure, homohexamer.

The catalysed reaction is 6-sulfo-beta-D-quinovose = 6-deoxy-6-sulfo-D-fructose. It catalyses the reaction 6-sulfo-beta-D-quinovose = 6-sulfo-D-rhamnose. Its activity is regulated as follows. Significantly inhibited by Cu(2+), Fe(3+) and Co(2+). Partially inhibited by Mg(2+), Ca(2+) and Mn(2+). Also inhibited by ATP, ADP, dATP, TTP and GTP. Its function is as follows. Catalyzes the isomerization of sulfoquinovose (SQ) to 6-deoxy-6-sulfo-D-fructose (SF). Can also catalyze the interconversion of SQ and sulforhamnose (SR). Has a clear preference for beta-SQ and little-to-no activity on alpha-SQ. In vitro, can also catalyze the interconversion of mannose, fructose and glucose, or lyxose and xylulose, but has extremely low activity with glucose. The protein is Sulfoquinovose isomerase (yihS) of Escherichia coli (strain K12).